The primary structure comprises 391 residues: Enoyl-CoA delta isomerase 2 (391 aa).

A mitochondrion-targeting transit peptide spans 1-36 (MAAVTWSRARCWCPSLLQVLRLPVTKLHLGRPAMRA). Residues 37–122 (TQQDFENAMN…VSSLSSSSEA (86 aa)) enclose the ACB domain. N6-acetyllysine; alternate is present on lysine 49. At lysine 49 the chain carries N6-succinyllysine; alternate. Lysine 53 is modified (N6-succinyllysine). Lysine 60 bears the N6-acetyllysine; alternate mark. At lysine 60 the chain carries N6-succinyllysine; alternate. Residue 64–68 (YALYK) participates in an acyl-CoA binding. Residues lysine 68, lysine 79, and lysine 88 each carry the N6-succinyllysine modification. The residue at position 90 (lysine 90) is an N6-acetyllysine; alternate. Lysine 90 is modified (N6-succinyllysine; alternate). An an acyl-CoA-binding site is contributed by lysine 90. Phosphoserine is present on serine 99. Residue tyrosine 109 coordinates an acyl-CoA. Residue serine 117 is modified to Phosphoserine. N6-succinyllysine occurs at positions 127 and 159. Positions 149–319 (TKITFNRPSK…AQGLVTEVFP (171 aa)) are ECH-like. 196-200 (SGNDL) lines the substrate pocket. Lysine 286 carries the N6-succinyllysine modification. The short motif at 389–391 (PKL) is the Microbody targeting signal element.

In the C-terminal section; belongs to the enoyl-CoA hydratase/isomerase family. As to expression, liver (at protein level).

The protein localises to the peroxisome matrix. It is found in the mitochondrion. The enzyme catalyses a (3Z)-enoyl-CoA = a 4-saturated (2E)-enoyl-CoA. It catalyses the reaction a (3E)-enoyl-CoA = a 4-saturated (2E)-enoyl-CoA. The catalysed reaction is (2E)-tetradecenoyl-CoA = (3Z)-tetradecenoyl-CoA. It carries out the reaction (3E)-tetradecenoyl-CoA = (2E)-tetradecenoyl-CoA. The enzyme catalyses (3E)-octenoyl-CoA = (2E)-octenoyl-CoA. It catalyses the reaction (3Z)-octenoyl-CoA = (2E)-octenoyl-CoA. The catalysed reaction is (3E)-nonenoyl-CoA = (2E)-nonenoyl-CoA. Its pathway is lipid metabolism; fatty acid beta-oxidation. Functionally, able to isomerize both 3-cis and 3-trans double bonds into the 2-trans form in a range of enoyl-CoA species. Has a preference for 3-trans substrates. The protein is Enoyl-CoA delta isomerase 2 of Rattus norvegicus (Rat).